The chain runs to 181 residues: Adenine phosphoribosyltransferase 1 (181 aa).

Belongs to the purine/pyrimidine phosphoribosyltransferase family. In terms of assembly, homodimer.

Its subcellular location is the cytoplasm. It catalyses the reaction AMP + diphosphate = 5-phospho-alpha-D-ribose 1-diphosphate + adenine. The protein operates within purine metabolism; AMP biosynthesis via salvage pathway; AMP from adenine: step 1/1. Catalyzes a salvage reaction resulting in the formation of AMP, that is energically less costly than de novo synthesis. In Triticum aestivum (Wheat), this protein is Adenine phosphoribosyltransferase 1 (APT1).